We begin with the raw amino-acid sequence, 165 residues long: NAD(P)H-quinone oxidoreductase subunit J, chloroplastic (165 aa).

Belongs to the complex I 30 kDa subunit family. As to quaternary structure, NDH is composed of at least 16 different subunits, 5 of which are encoded in the nucleus.

The protein resides in the plastid. It is found in the chloroplast thylakoid membrane. It catalyses the reaction a plastoquinone + NADH + (n+1) H(+)(in) = a plastoquinol + NAD(+) + n H(+)(out). The catalysed reaction is a plastoquinone + NADPH + (n+1) H(+)(in) = a plastoquinol + NADP(+) + n H(+)(out). Its function is as follows. NDH shuttles electrons from NAD(P)H:plastoquinone, via FMN and iron-sulfur (Fe-S) centers, to quinones in the photosynthetic chain and possibly in a chloroplast respiratory chain. The immediate electron acceptor for the enzyme in this species is believed to be plastoquinone. Couples the redox reaction to proton translocation, and thus conserves the redox energy in a proton gradient. The protein is NAD(P)H-quinone oxidoreductase subunit J, chloroplastic of Ipomoea purpurea (Common morning glory).